The following is a 602-amino-acid chain: MCGIIGYIGDRKACEVIVKGLKRLEYRGYDSAGVVTGNGETLDVRKGAGRIDKLTEKLGFLEMEGNRGIGHTRWATHGVPNDINAHPQKDCTGKIVLVHNGIIENFAELKEELLKKGHVFRSDTDTEVIAHLIEEELKGSENFEEALRKALNKLRGSFALAIVYADEPDKLYVVRNESPLVLGIGEGEMFAASDVPAFLEYTNKVIFLDDGEYAILTKDSYVVKRIDTGEVVEKPVHEISWTLEMAEKAGYPHFMLKEIYEQPRAIKDAIHGNREIIRSVAEEIANYDKIIFVAMGTSYHAALVGKSLFQRLAKKVPIVEEASEFRYEFEDLIDDKTLVIAITQSGETADTLAAMKLAKKNGAKVLAVVNVVGSMATRIADLTLYTHAGPEIGVAATKTYTTQLTVLTMLAIELAKVLGTASEDYLEKLEDELMKVPELVELALKHDEALRELAETLKDKRDFFYIGRGISVPTALEGALKLKEISYIHAEGLSAGELKHGPLALLEDGVPVVAINPSGKVFDKMVSNIEEAKARGAMIISLSDREELSRVSDVLVKMPEVDELLSPIVYVVPLQLLAYHLAVLRGNDPDKPRNLAKSVTVE.

Residue Cys-2 is the Nucleophile; for GATase activity of the active site. The Glutamine amidotransferase type-2 domain occupies Cys-2–Asp-219. 2 consecutive SIS domains span residues Val-280–Thr-420 and Leu-453–Pro-592. The For Fru-6P isomerization activity role is filled by Lys-597.

As to quaternary structure, homodimer.

The protein localises to the cytoplasm. It carries out the reaction D-fructose 6-phosphate + L-glutamine = D-glucosamine 6-phosphate + L-glutamate. Its function is as follows. Catalyzes the first step in hexosamine metabolism, converting fructose-6P into glucosamine-6P using glutamine as a nitrogen source. In Thermococcus kodakarensis (strain ATCC BAA-918 / JCM 12380 / KOD1) (Pyrococcus kodakaraensis (strain KOD1)), this protein is Glutamine--fructose-6-phosphate aminotransferase [isomerizing].